Consider the following 92-residue polypeptide: Small ribosomal subunit protein uS19c (92 aa).

Belongs to the universal ribosomal protein uS19 family.

It localises to the plastid. Its function is as follows. Protein S19 forms a complex with S13 that binds strongly to the 16S ribosomal RNA. The protein is Small ribosomal subunit protein uS19c of Cuscuta obtusiflora (Peruvian dodder).